The following is a 156-amino-acid chain: Putative F-box protein R637 (156 aa).

Residues histidine 4 to lysine 51 enclose the F-box domain.

The sequence is that of Putative F-box protein R637 from Acanthamoeba polyphaga mimivirus (APMV).